A 765-amino-acid chain; its full sequence is E3 ubiquitin-protein ligase SlrP (765 aa).

The segment at 1 to 451 (MFNITNIQST…VDYQGPRVLF (451 aa)) is interaction with target proteins. LRR repeat units follow at residues 200–219 (QITTLILDNNELKSLPENLQ), 221–242 (NIKTLYANSNQLTSIPATLPDT), 243–262 (IQEMELSINRITELPERLPS), 263–284 (ALQSLDLFHNKISCLPENLPEE), 285–305 (LRYLSVYDNSIRTLPAHLPSG), 306–325 (ITHLNVQSNSLTALPETLPP), 326–346 (GLKTLEAGENALTSLPASLPP), 347–368 (ELQVLDVSKNQITVLPETLPPT), 369–389 (ITTLDVSRNALTNLPENLPAA), and 390–410 (LQIMQASRNNLVRLPESLPHF). The interval 452–461 (AMGDFSIVRV) is linker. The interval 462–765 (TRPLHQAVQG…VSSLMSAYWR (304 aa)) is E3 ubiquitin-protein ligase catalytic domain. The NEL domain maps to 464–758 (PLHQAVQGWL…NILLKKEVSS (295 aa)). Cys546 functions as the Glycyl thioester intermediate in the catalytic mechanism.

Belongs to the LRR-containing bacterial E3 ligase family. Interacts with host TXN. Ubiquitinated in the presence of host E1 ubiquitin-activating enzyme, E2 ubiquitin-conjugating enzyme and ubiquitin.

The protein localises to the secreted. It is found in the host cytoplasm. The catalysed reaction is S-ubiquitinyl-[E2 ubiquitin-conjugating enzyme]-L-cysteine + [acceptor protein]-L-lysine = [E2 ubiquitin-conjugating enzyme]-L-cysteine + N(6)-ubiquitinyl-[acceptor protein]-L-lysine.. With respect to regulation, binding to TXN is inhibited by hydrogen peroxide in vitro. Effector proteins function to alter host cell physiology and promote bacterial survival in host tissues. This protein is an E3 ubiquitin ligase that interferes with host's ubiquitination pathway. Can ubiquitinate both ubiquitin and host TXN (thioredoxin). Leads to significant decrease of thioredoxin activity and increase of host cell death. The sequence is that of E3 ubiquitin-protein ligase SlrP (slrP) from Salmonella typhimurium (strain LT2 / SGSC1412 / ATCC 700720).